Consider the following 231-residue polypeptide: Transmembrane protein 225 (231 aa).

Topologically, residues 1–13 (MMRIPNRSIQAAN) are cytoplasmic. The helical transmembrane segment at 14-34 (IFFSSGAILLLIAGLIMENWV) threads the bilayer. Topologically, residues 35-71 (ELIPKVRKDKVTHSPWLGCCPPFWPEESLEAIRRMMM) are extracellular. Residues 72–92 (MSLNISIYLNLIIGLQFTYMI) traverse the membrane as a helical segment. At 93–99 (SQNKCVH) the chain is on the cytoplasmic side. The chain crosses the membrane as a helical span at residues 100-120 (LLIGFLSFFTGCLLFYAIIVY). Over 121–139 (HHKLNKGQYVYFVNYKTKW) the chain is Extracellular. A helical transmembrane segment spans residues 140–160 (IVFTIYLTIALFLTCGIFSFI). Over 161 to 231 (QCTNRCACMK…LQSRRVTWAL (71 aa)) the chain is Cytoplasmic. Residues 225-229 (RRVTW) carry the RVxF motif.

In terms of assembly, interacts (via RVxF motif) with PPP1CC. As to expression, expressed in testis, specifically in spermatocytes and round spermatids.

The protein resides in the cytoplasmic vesicle. It is found in the secretory vesicle. The protein localises to the acrosome membrane. In terms of biological role, probably inhibits protein phosphatase 1 (PP1) in sperm via binding to catalytic subunit PPP1CC. The sequence is that of Transmembrane protein 225 (Tmem225) from Rattus norvegicus (Rat).